We begin with the raw amino-acid sequence, 431 residues long: Sorting nexin-31 (431 aa).

The 107-residue stretch at 1-107 (MHICIPVTEE…DYFRKLQMDT (107 aa)) folds into the PX domain.

Belongs to the sorting nexin family.

May be involved in protein trafficking. In Xenopus laevis (African clawed frog), this protein is Sorting nexin-31 (snx31).